Here is a 139-residue protein sequence, read N- to C-terminus: Aspartate 1-decarboxylase (139 aa).

The active-site Schiff-base intermediate with substrate; via pyruvic acid is the Ser25. Residue Ser25 is modified to Pyruvic acid (Ser). Residue Thr57 coordinates substrate. Tyr58 serves as the catalytic Proton donor. 73 to 75 (GAA) lines the substrate pocket.

It belongs to the PanD family. In terms of assembly, heterooctamer of four alpha and four beta subunits. Requires pyruvate as cofactor. Post-translationally, is synthesized initially as an inactive proenzyme, which is activated by self-cleavage at a specific serine bond to produce a beta-subunit with a hydroxyl group at its C-terminus and an alpha-subunit with a pyruvoyl group at its N-terminus.

It localises to the cytoplasm. It catalyses the reaction L-aspartate + H(+) = beta-alanine + CO2. Its pathway is cofactor biosynthesis; (R)-pantothenate biosynthesis; beta-alanine from L-aspartate: step 1/1. Its function is as follows. Catalyzes the pyruvoyl-dependent decarboxylation of aspartate to produce beta-alanine. This chain is Aspartate 1-decarboxylase, found in Mycobacterium bovis (strain BCG / Tokyo 172 / ATCC 35737 / TMC 1019).